The primary structure comprises 593 residues: Aspartate--tRNA ligase (593 aa).

E173 provides a ligand contact to L-aspartate. Positions 197 to 200 (QLFK) are aspartate. R219 provides a ligand contact to L-aspartate. ATP contacts are provided by residues 219–221 (RDE) and Q228. Residue H448 participates in L-aspartate binding. Position 482 (E482) interacts with ATP. R489 contacts L-aspartate. 534-537 (GLDR) contacts ATP.

Belongs to the class-II aminoacyl-tRNA synthetase family. Type 1 subfamily. In terms of assembly, homodimer.

The protein resides in the cytoplasm. It catalyses the reaction tRNA(Asp) + L-aspartate + ATP = L-aspartyl-tRNA(Asp) + AMP + diphosphate. Catalyzes the attachment of L-aspartate to tRNA(Asp) in a two-step reaction: L-aspartate is first activated by ATP to form Asp-AMP and then transferred to the acceptor end of tRNA(Asp). This Shewanella denitrificans (strain OS217 / ATCC BAA-1090 / DSM 15013) protein is Aspartate--tRNA ligase.